We begin with the raw amino-acid sequence, 298 residues long: HTH-type transcriptional regulator TsaR (298 aa).

The region spanning Met1–Thr58 is the HTH lysR-type domain. The segment at residues Leu18–Gln37 is a DNA-binding region (H-T-H motif). Toluene-4-sulfonate is bound by residues Ser98 and Ala100.

Belongs to the LysR transcriptional regulatory family. As to quaternary structure, homotetramer. Dimer of dimers related by a twofold axis.

Sensitive to oxygen. Regulates expression of the tsaMBCD1 operon and of tsaT in response to p-toluenesulfonate (TSA). Acts by binding directly to the promoter region. Binding to the tsa promoter depends on TSA concentration. The protein is HTH-type transcriptional regulator TsaR (tsaR) of Comamonas testosteroni (Pseudomonas testosteroni).